The following is a 571-amino-acid chain: Cytoplasmic polyadenylation element-binding protein 2 (571 aa).

2 disordered regions span residues 1–23 (MSKSRRLFLSMQGDDDFWGNGDR) and 51–75 (FKQNKLGRQQSESRHENEENKVSQE). The segment covering 61–75 (SESRHENEENKVSQE) has biased composition (basic and acidic residues). An RRM domain is found at 435–517 (LVAFIGGVPR…KRVEIKPYFF (83 aa)).

Functionally, cytoplasmic polyadenylation element binding protein that binds to and regulates the translation of specific mRNAs. The protein is Cytoplasmic polyadenylation element-binding protein 2 (cpb-2) of Caenorhabditis remanei (Caenorhabditis vulgaris).